The following is a 219-amino-acid chain: Proline-rich protein 27 (219 aa).

Residues 1–15 (MKLLLWACIVCVAFA) form the signal peptide. The segment covering 155–204 (AAEPAAEAPVGAEPAAEAPVAAEPAAEAPVGVEPAAEEPSPAEPATAKPA) has biased composition (low complexity). The interval 155-219 (AAEPAAEAPV…PSPSLEQANQ (65 aa)) is disordered.

It is found in the secreted. This chain is Proline-rich protein 27 (PRR27), found in Homo sapiens (Human).